Here is a 694-residue protein sequence, read N- to C-terminus: Proprotein convertase subtilisin/kexin type 9 (694 aa).

An N-terminal signal peptide occupies residues 1–34 (MGTHCSAWLRWPLLPLLPPLLLLLLLLCPTGAGA). The propeptide occupies 35 to 155 (QDEDGDYEEL…IEEDSFVFAQ (121 aa)). Sulfotyrosine is present on Tyr-41. The residue at position 50 (Ser-50) is a Phosphoserine. Residues 158 to 470 (PWNLERIIPA…RTVWSAHSGP (313 aa)) enclose the Peptidase S8 domain. Active-site charge relay system residues include Asp-189 and His-229. 2 cysteine pairs are disulfide-bonded: Cys-226–Cys-258 and Cys-326–Cys-361. The active-site Charge relay system is the Ser-389. The tract at residues 453–694 (ETGGQLLCRT…RPSAKASWVQ (242 aa)) is C-terminal domain. Disulfide bonds link Cys-460–Cys-530, Cys-480–Cys-529, and Cys-489–Cys-512. A Cell attachment site motif is present at residues 499–501 (RGD). Residue Asn-536 is glycosylated (N-linked (GlcNAc...) asparagine). Intrachain disulfides connect Cys-537/Cys-604, Cys-555/Cys-603, Cys-565/Cys-591, Cys-611/Cys-682, Cys-629/Cys-681, and Cys-638/Cys-657. Ser-691 bears the Phosphoserine mark.

This sequence belongs to the peptidase S8 family. Monomer. Can self-associate to form dimers and higher multimers which may have increased LDLR degrading activity. The precursor protein but not the mature protein may form multimers. Interacts with APOB, VLDLR, LRP8/APOER2 and BACE1. The full-length immature form (pro-PCSK9) interacts with SCNN1A, SCNN1B and SCNN1G. The pro-PCSK9 form (via C-terminal domain) interacts with LDLR. Interacts (via the C-terminal domain) with ANXA2 (via repeat Annexin 1); the interaction inhibits the degradation of LDLR. Ca(2+) is required as a cofactor. Cleavage by furin and PCSK5 generates a truncated inactive protein that is unable to induce LDLR degradation. Post-translationally, undergoes autocatalytic cleavage in the endoplasmic reticulum to release the propeptide from the N-terminus and the cleavage of the propeptide is strictly required for its maturation and activation. The cleaved propeptide however remains associated with the catalytic domain through non-covalent interactions, preventing potential substrates from accessing its active site. As a result, it is secreted from cells as a propeptide-containing, enzymatically inactive protein. In terms of processing, phosphorylation protects the propeptide against proteolysis. Hepatocytes, kidney mesenchymal cells, intestinal ileum, colon epithelia and embryonic brain telencephalon neurons.

The protein resides in the cytoplasm. Its subcellular location is the secreted. The protein localises to the endosome. It localises to the lysosome. It is found in the cell surface. The protein resides in the endoplasmic reticulum. Its subcellular location is the golgi apparatus. Its proteolytic activity is autoinhibited by the non-covalent binding of the propeptide to the catalytic domain. Inhibited by EGTA. Its function is as follows. Crucial player in the regulation of plasma cholesterol homeostasis. Binds to low-density lipid receptor family members: low density lipoprotein receptor (LDLR), very low density lipoprotein receptor (VLDLR), apolipoprotein E receptor (LRP1/APOER) and apolipoprotein receptor 2 (LRP8/APOER2), and promotes their degradation in intracellular acidic compartments. Acts via a non-proteolytic mechanism to enhance the degradation of the hepatic LDLR through a clathrin LDLRAP1/ARH-mediated pathway. May prevent the recycling of LDLR from endosomes to the cell surface or direct it to lysosomes for degradation. Can induce ubiquitination of LDLR leading to its subsequent degradation. Inhibits intracellular degradation of APOB via the autophagosome/lysosome pathway in a LDLR-independent manner. Involved in the disposal of non-acetylated intermediates of BACE1 in the early secretory pathway. Inhibits epithelial Na(+) channel (ENaC)-mediated Na(+) absorption by reducing ENaC surface expression primarily by increasing its proteasomal degradation. Regulates neuronal apoptosis via modulation of LRP8/APOER2 levels and related anti-apoptotic signaling pathways. This Mus musculus (Mouse) protein is Proprotein convertase subtilisin/kexin type 9 (Pcsk9).